We begin with the raw amino-acid sequence, 158 residues long: Curculin-2 (158 aa).

Positions 1–22 (MAAKFLLTILVTFAAVASLGMA) are cleaved as a signal peptide. The region spanning 23–131 (DSVLLSGQTL…VLWPLGLNGC (109 aa)) is the Bulb-type lectin domain. A disulfide bond links Cys51 and Cys74. Asn103 is a glycosylation site (N-linked (GlcNAc...) asparagine). The propeptide occupies 136 to 158 (GEITVAKDSTEPQHEDIKMVINN).

As to quaternary structure, heterodimer with curculin-1; Disulfide-linked.

Taste-modifying protein; sweet-tasting. After curculin, water elicits a sweet taste, and sour substances induce a stronger sense of sweetness. This Molineria latifolia (Lumbah) protein is Curculin-2.